The sequence spans 104 residues: uncharacterized protein (104 aa).

The protein resides in the mitochondrion. This is an uncharacterized protein from Claviceps purpurea (Ergot fungus).